A 195-amino-acid polypeptide reads, in one-letter code: Apoptosis-associated speck-like protein containing a CARD (195 aa).

The Pyrin domain occupies 1-91; the sequence is MGRARDAILD…AGQLQAATHQ (91 aa). Glycyl lysine isopeptide (Lys-Gly) (interchain with G-Cter in ubiquitin) cross-links involve residues lysine 55 and lysine 174. A CARD domain is found at 107 to 195; that stretch reads AAKPGLHFID…SYLVEDLERS (89 aa). Position 195 is a phosphoserine (serine 195).

In terms of assembly, self-associates; enforced oligomerization induces apoptosis, NF-kappa-B regulation and interleukin-1 beta secretion. Homooligomers can form disk-like particles of approximately 12 nm diameter and approximately 1 nm height. Next to isoform 1, also isoform 2 and isoform 3 may be involved in oligomerization leading to functional regulation. Component of several inflammasomes containing one pattern recognition receptor/sensor, such as NLRP1, NLRP2, NLRP3, NLRP6, NLRC4, AIM2, MEFV or NOD2, and probably NLRC4, NLRP12 or IFI16. Major component of the ASC pyroptosome, a 1-2 um supramolecular assembly (one per macrophage cell) which consists of oligomerized PYCARD dimers and CASP1. Interacts with CASP1 (precursor form); the interaction induces activation of CASP1 leading to the processing of interleukin-1 beta; PYCARD competes with RIPK2 for binding to CASP1. Interacts with NLRP3; the interaction requires the homooligomerization of NLRP3. Interacts with NLRP2, NLRC4, MEFV, CARD16, AIM2, IFI16, NOD2, RIGI, RIPK2, PYDC1, PYDC2, NLRP10, CASP8, CHUK, IKBKB and BAX. Component of the AIM2 PANoptosome complex, a multiprotein complex that drives inflammatory cell death (PANoptosis). Post-translationally, phosphorylated. In terms of processing, 'Lys-63'-linked polyubiquitination by TRAF3 is critical for speck formation and inflammasome activation. 'Lys-63'-linked deubiquitinated by USP50; a crucial step for NLRP3-mediated inflammasome activation. 'Lys-63'-linked polyubiquitination by PELI1 is also critical for speck formation and inflammasome activation. Deubiquitinated by USP3 that cleaves 'Lys-48'-linked ubiquitin chains and strengthens its stability by blocking proteasomal degradation. Widely expressed at low levels. Detected in peripheral blood leukocytes, lung, small intestine, spleen, thymus, colon and at lower levels in placenta, liver and kidney. Very low expression in skeletal muscle, heart and brain. Expressed in lung epithelial cells (at protein level). Detected in the leukemia cell lines HL-60 and U-937, but not in Jurkat T-cell lymphoma and Daudi Burkitt's lymphoma. Detected in the melanoma cell line WM35, but not in WM793. Not detected in HeLa cervical carcinoma cells and MOLT-4 lymphocytic leukemia cells.

It localises to the cytoplasm. The protein resides in the inflammasome. The protein localises to the endoplasmic reticulum. Its subcellular location is the mitochondrion. It is found in the nucleus. It localises to the golgi apparatus membrane. Functionally, functions as a key mediator in apoptosis and inflammation. Promotes caspase-mediated apoptosis involving predominantly caspase-8 and also caspase-9 in a probable cell type-specific manner. Involved in activation of the mitochondrial apoptotic pathway, promotes caspase-8-dependent proteolytic maturation of BID independently of FADD in certain cell types and also mediates mitochondrial translocation of BAX and activates BAX-dependent apoptosis coupled to activation of caspase-9, -2 and -3. Involved in innate immune response by acting as an integral adapter in the assembly of various inflammasomes (NLRP1, NLRP2, NLRP3, NLRP6, AIM2 and probably IFI16) which recruit and activate caspase-1 leading to processing and secretion of pro-inflammatory cytokines. Caspase-1-dependent inflammation leads to macrophage pyroptosis, a form of cell death. The function as activating adapter in different types of inflammasomes is mediated by the pyrin and CARD domains and their homotypic interactions. Clustered PYCARD nucleates the formation of caspase-1 filaments through the interaction of their respective CARD domains, acting as a platform for of caspase-1 polymerization. In the NLRP1 and NLRC4 inflammasomes seems not be required but facilitates the processing of procaspase-1. In cooperation with NOD2 involved in an inflammasome activated by bacterial muramyl dipeptide leading to caspase-1 activation. May be involved in RIGI-triggered pro-inflammatory responses and inflammasome activation. In collaboration with AIM2 which detects cytosolic double-stranded DNA may also be involved in a caspase-1-independent cell death that involves caspase-8. In adaptive immunity may be involved in maturation of dendritic cells to stimulate T-cell immunity and in cytoskeletal rearrangements coupled to chemotaxis and antigen uptake may be involved in post-transcriptional regulation of the guanine nucleotide exchange factor DOCK2; the latter function is proposed to involve the nuclear form. Also involved in transcriptional activation of cytokines and chemokines independent of the inflammasome; this function may involve AP-1, NF-kappa-B, MAPK and caspase-8 signaling pathways. For regulation of NF-kappa-B activating and inhibiting functions have been reported. Modulates NF-kappa-B induction at the level of the IKK complex by inhibiting kinase activity of CHUK and IKBK. Proposed to compete with RIPK2 for association with CASP1 thereby down-regulating CASP1-mediated RIPK2-dependent NF-kappa-B activation and activating interleukin-1 beta processing. Modulates host resistance to DNA virus infection, probably by inducing the cleavage of and inactivating CGAS in presence of cytoplasmic double-stranded DNA. May have a regulating effect on the function as inflammasome adapter. In terms of biological role, seems to inhibit inflammasome-mediated maturation of interleukin-1 beta. The sequence is that of Apoptosis-associated speck-like protein containing a CARD from Homo sapiens (Human).